Reading from the N-terminus, the 113-residue chain is T cell receptor alpha variable 8-4 (113 aa).

A signal peptide spans 1–20 (MLLLLVPVLEVIFTLGGTRA). The Ig-like domain maps to 21–113 (QSVTQLGSHV…DAAEYFCAVS (93 aa)). Cysteine 42 and cysteine 110 are joined by a disulfide. Residue asparagine 43 is glycosylated (N-linked (GlcNAc...) asparagine).

As to quaternary structure, alpha-beta TR is a heterodimer composed of an alpha and beta chain; disulfide-linked. The alpha-beta TR is associated with the transmembrane signaling CD3 coreceptor proteins to form the TR-CD3 (TcR or TCR). The assembly of alpha-beta TR heterodimers with CD3 occurs in the endoplasmic reticulum where a single alpha-beta TR heterodimer associates with one CD3D-CD3E heterodimer, one CD3G-CD3E heterodimer and one CD247 homodimer forming a stable octameric structure. CD3D-CD3E and CD3G-CD3E heterodimers preferentially associate with TR alpha and TR beta chains, respectively. The association of the CD247 homodimer is the last step of TcR assembly in the endoplasmic reticulum and is required for transport to the cell surface.

Its subcellular location is the cell membrane. V region of the variable domain of T cell receptor (TR) alpha chain that participates in the antigen recognition. Alpha-beta T cell receptors are antigen specific receptors which are essential to the immune response and are present on the cell surface of T lymphocytes. Recognize peptide-major histocompatibility (MH) (pMH) complexes that are displayed by antigen presenting cells (APC), a prerequisite for efficient T cell adaptive immunity against pathogens. Binding of alpha-beta TR to pMH complex initiates TR-CD3 clustering on the cell surface and intracellular activation of LCK that phosphorylates the ITAM motifs of CD3G, CD3D, CD3E and CD247 enabling the recruitment of ZAP70. In turn ZAP70 phosphorylates LAT, which recruits numerous signaling molecules to form the LAT signalosome. The LAT signalosome propagates signal branching to three major signaling pathways, the calcium, the mitogen-activated protein kinase (MAPK) kinase and the nuclear factor-kappa-B (NF-kB) pathways, leading to the mobilization of transcription factors that are critical for gene expression and essential for T cell growth and differentiation. The T cell repertoire is generated in the thymus, by V-(D)-J rearrangement. This repertoire is then shaped by intrathymic selection events to generate a peripheral T cell pool of self-MH restricted, non-autoaggressive T cells. Post-thymic interaction of alpha-beta TR with the pMH complexes shapes TR structural and functional avidity. The chain is T cell receptor alpha variable 8-4 from Homo sapiens (Human).